The chain runs to 129 residues: MARRTNTRKRRVRKNIDTGIAHIRSTFNNTIVTITDVHGNAIAWASAGSLGFKGSRKSTPFAAQMAAEAAAKASMEHGMKTVEVNVKGPGAGREAAIRALQAAGLEITAIKDVTPIPHNGCRPPKRRRV.

Belongs to the universal ribosomal protein uS11 family. Part of the 30S ribosomal subunit. Interacts with proteins S7 and S18. Binds to IF-3.

Functionally, located on the platform of the 30S subunit, it bridges several disparate RNA helices of the 16S rRNA. Forms part of the Shine-Dalgarno cleft in the 70S ribosome. The chain is Small ribosomal subunit protein uS11 from Geobacillus kaustophilus (strain HTA426).